Here is a 910-residue protein sequence, read N- to C-terminus: Schlafen family member 8 (910 aa).

The interval 1–354 (METHPSLAVK…WVRMMVDFGP (354 aa)) is n'-domain region. Catalysis depends on residues glutamate 205 and glutamate 210. Positions 280, 282, and 319 each coordinate Zn(2+). 599–606 (GLPGSGKT) is an ATP binding site.

Belongs to the Schlafen family. Subgroup III subfamily. It depends on Mg(2+) as a cofactor. In T-cells, expressed at relatively constant levels during development: expressed in immature CD3(-)CD4(-)CD8(-) T-cells (DN stage), in CD4(+)CD8(+) double-positive stage (DP) and mature CD4(+) or CD8(+) thymocytes. Expression is slightly reduced at the DP stage.

The protein localises to the cytoplasm. In terms of biological role, endoribonuclease that cleaves tRNAs and rRNAs. Cleaves tRNAs 11 nucleotides from the 3'-terminus at the acceptor stem. May be involved in immune system via regulation of inflammation. This chain is Schlafen family member 8, found in Mus musculus (Mouse).